A 561-amino-acid chain; its full sequence is DNA ligase B (561 aa).

The N6-AMP-lysine intermediate role is filled by K125.

This sequence belongs to the NAD-dependent DNA ligase family. LigB subfamily.

The catalysed reaction is NAD(+) + (deoxyribonucleotide)n-3'-hydroxyl + 5'-phospho-(deoxyribonucleotide)m = (deoxyribonucleotide)n+m + AMP + beta-nicotinamide D-nucleotide.. Catalyzes the formation of phosphodiester linkages between 5'-phosphoryl and 3'-hydroxyl groups in double-stranded DNA using NAD as a coenzyme and as the energy source for the reaction. This Escherichia coli O127:H6 (strain E2348/69 / EPEC) protein is DNA ligase B.